The sequence spans 268 residues: Tryptophan synthase alpha chain (268 aa).

Catalysis depends on proton acceptor residues E49 and D60.

This sequence belongs to the TrpA family. In terms of assembly, tetramer of two alpha and two beta chains.

It catalyses the reaction (1S,2R)-1-C-(indol-3-yl)glycerol 3-phosphate + L-serine = D-glyceraldehyde 3-phosphate + L-tryptophan + H2O. The protein operates within amino-acid biosynthesis; L-tryptophan biosynthesis; L-tryptophan from chorismate: step 5/5. The alpha subunit is responsible for the aldol cleavage of indoleglycerol phosphate to indole and glyceraldehyde 3-phosphate. This is Tryptophan synthase alpha chain from Salmonella typhimurium (strain LT2 / SGSC1412 / ATCC 700720).